The following is a 431-amino-acid chain: Asparagine--tRNA ligase 1 (431 aa).

Belongs to the class-II aminoacyl-tRNA synthetase family. In terms of assembly, homodimer.

It localises to the cytoplasm. It catalyses the reaction tRNA(Asn) + L-asparagine + ATP = L-asparaginyl-tRNA(Asn) + AMP + diphosphate + H(+). This is Asparagine--tRNA ligase 1 (asnS1) from Lactiplantibacillus plantarum (strain ATCC BAA-793 / NCIMB 8826 / WCFS1) (Lactobacillus plantarum).